Reading from the N-terminus, the 377-residue chain is Nitric oxide reductase FlRd-NAD(+) reductase (377 aa).

The protein belongs to the FAD-dependent oxidoreductase family. FAD is required as a cofactor.

The protein localises to the cytoplasm. The catalysed reaction is 2 reduced [nitric oxide reductase rubredoxin domain] + NAD(+) + H(+) = 2 oxidized [nitric oxide reductase rubredoxin domain] + NADH. The protein operates within nitrogen metabolism; nitric oxide reduction. One of at least two accessory proteins for anaerobic nitric oxide (NO) reductase. Reduces the rubredoxin moiety of NO reductase. In Escherichia coli O81 (strain ED1a), this protein is Nitric oxide reductase FlRd-NAD(+) reductase.